The chain runs to 201 residues: Large ribosomal subunit protein uL18 (201 aa).

Belongs to the universal ribosomal protein uL18 family. Part of the 50S ribosomal subunit. Contacts the 5S and 23S rRNAs.

Functionally, this is one of the proteins that bind and probably mediate the attachment of the 5S RNA into the large ribosomal subunit, where it forms part of the central protuberance. This Thermococcus kodakarensis (strain ATCC BAA-918 / JCM 12380 / KOD1) (Pyrococcus kodakaraensis (strain KOD1)) protein is Large ribosomal subunit protein uL18.